A 280-amino-acid chain; its full sequence is uncharacterized protein (280 aa).

The active-site Proton donor is the Tyr54. His116 is a substrate binding site. Residue 194–246 (SPLMQGQLLDHPVLADIAQTYNKSVAQIILRWDLQHGIITIPKSTKEHRIKEN) coordinates NADP(+).

Belongs to the aldo/keto reductase family.

This is an uncharacterized protein from Bacillus subtilis (strain 168).